We begin with the raw amino-acid sequence, 376 residues long: Cyclin-D3-1 (376 aa).

Residues 298–376 (KRKSHDSSSS…HLPWAIVATP (79 aa)) form a disordered region. Over residues 321–349 (NSDESSNDSWSASSCNPPTSSSSPQQQPP) the composition is skewed to low complexity. Residues 354 to 363 (RGAEENEKKK) show a composition bias toward basic and acidic residues.

This sequence belongs to the cyclin family. Cyclin D subfamily. As to quaternary structure, interacts with the C-terminal domain of CDKA-1. Interacts with KRP1/ICK1. Interacts with KRP6. In terms of processing, phosphorylated. Highly expressed in roots and at lower levels in leaves and flowers. Expressed in vegetative shoot meristem and inflorescence.

Its function is as follows. Involved in the control of the cell cycle at the G1/S (start) transition. Activates the G1/S phase transition in response to cytokinin hormone signal, but declines in response to sucrose starvation leading to G1 arrest. Involved in the induction of mitotic cell division. Plays an important role in the switch from cell proliferation to the final stages of differentiation during plant development. May not be involved in the activation of cell cycle in the root apical meristem (RAM) in the early phase of seed germination. Promotes divisions in the guard cells (GCs) after the guard mother cells (GMC) symmetric division. The sequence is that of Cyclin-D3-1 (CYCD3-1) from Arabidopsis thaliana (Mouse-ear cress).